Here is a 322-residue protein sequence, read N- to C-terminus: Crystallin J1A (322 aa).

The protein belongs to the ADP-ribosylglycohydrolase family. J1 crystallin subfamily. Expressed in the rhopalia. Present in both the large and small eyes.

The polypeptide is Crystallin J1A (Tripedalia cystophora (Jellyfish)).